A 240-amino-acid chain; its full sequence is UDP-2,3-diacylglucosamine hydrolase (240 aa).

Mn(2+)-binding residues include D8, H10, D41, N79, and H114. Residue 79–80 (NR) coordinates substrate. The substrate site is built by D122, S160, T164, K167, and H195. Residues H195 and H197 each contribute to the Mn(2+) site.

This sequence belongs to the LpxH family. The cofactor is Mn(2+).

The protein resides in the cell inner membrane. It catalyses the reaction UDP-2-N,3-O-bis[(3R)-3-hydroxytetradecanoyl]-alpha-D-glucosamine + H2O = 2-N,3-O-bis[(3R)-3-hydroxytetradecanoyl]-alpha-D-glucosaminyl 1-phosphate + UMP + 2 H(+). It functions in the pathway glycolipid biosynthesis; lipid IV(A) biosynthesis; lipid IV(A) from (3R)-3-hydroxytetradecanoyl-[acyl-carrier-protein] and UDP-N-acetyl-alpha-D-glucosamine: step 4/6. In terms of biological role, hydrolyzes the pyrophosphate bond of UDP-2,3-diacylglucosamine to yield 2,3-diacylglucosamine 1-phosphate (lipid X) and UMP by catalyzing the attack of water at the alpha-P atom. Involved in the biosynthesis of lipid A, a phosphorylated glycolipid that anchors the lipopolysaccharide to the outer membrane of the cell. In Pseudomonas aeruginosa (strain UCBPP-PA14), this protein is UDP-2,3-diacylglucosamine hydrolase.